A 168-amino-acid chain; its full sequence is Protein-export protein SecB (168 aa).

Belongs to the SecB family. Homotetramer, a dimer of dimers. One homotetramer interacts with 1 SecA dimer.

Its subcellular location is the cytoplasm. In terms of biological role, one of the proteins required for the normal export of preproteins out of the cell cytoplasm. It is a molecular chaperone that binds to a subset of precursor proteins, maintaining them in a translocation-competent state. It also specifically binds to its receptor SecA. The chain is Protein-export protein SecB from Rhizobium meliloti (strain 1021) (Ensifer meliloti).